The chain runs to 309 residues: General transcription factor IIH subunit 3 (309 aa).

The segment at 269-286 adopts a C4-type zinc-finger fold; the sequence is CSVCLSIFCNFSPICTTC.

This sequence belongs to the TFB4 family. As to quaternary structure, part of a TFIID-containing RNA polymerase II pre-initiation complex that is composed of TBP and at least GTF2A1, GTF2A2, GTF2E1, GTF2E2, GTF2F1, GTF2H2, GTF2H3, GTF2H4, GTF2H5, GTF2B, TCEA1, ERCC2, ERCC3, TAF1, TAF2, TAF3, TAF4, TAF5, TAF6, TAF7, TAF8, TAF9, TAF10, TAF11, TAF12 and TAF13. Component of the 7-subunit TFIIH core complex composed of XPB/ERCC3, XPD/ERCC2, GTF2H1, GTF2H2, GTF2H3, GTF2H4 and GTF2H5, which is active in NER. The core complex associates with the 3-subunit CDK-activating kinase (CAK) module composed of CCNH/cyclin H, CDK7 and MNAT1 to form the 10-subunit holoenzyme (holo-TFIIH) active in transcription. Interacts with RARA; the interaction requires prior phosphorylation of RARA on 'Ser-369' which then enhances interaction of RARA with CDK7.

The protein resides in the nucleus. In terms of biological role, component of the general transcription and DNA repair factor IIH (TFIIH) core complex, which is involved in general and transcription-coupled nucleotide excision repair (NER) of damaged DNA and, when complexed to CAK, in RNA transcription by RNA polymerase II. In NER, TFIIH acts by opening DNA around the lesion to allow the excision of the damaged oligonucleotide and its replacement by a new DNA fragment. In transcription, TFIIH has an essential role in transcription initiation. When the pre-initiation complex (PIC) has been established, TFIIH is required for promoter opening and promoter escape. Phosphorylation of the C-terminal tail (CTD) of the largest subunit of RNA polymerase II by the kinase module CAK controls the initiation of transcription. This chain is General transcription factor IIH subunit 3 (Gtf2h3), found in Rattus norvegicus (Rat).